We begin with the raw amino-acid sequence, 370 residues long: tRNA-specific 2-thiouridylase MnmA (370 aa).

Residues 9-16 (GMSGGVDS) and Met-35 each bind ATP. The segment at 95-97 (NPD) is interaction with target base in tRNA. Cys-100 acts as the Nucleophile in catalysis. An intrachain disulfide couples Cys-100 to Cys-196. An ATP-binding site is contributed by Gly-124. The tract at residues 146–148 (KDQ) is interaction with tRNA. The Cysteine persulfide intermediate role is filled by Cys-196. The interaction with tRNA stretch occupies residues 308 to 309 (RY).

The protein belongs to the MnmA/TRMU family.

It localises to the cytoplasm. It catalyses the reaction S-sulfanyl-L-cysteinyl-[protein] + uridine(34) in tRNA + AH2 + ATP = 2-thiouridine(34) in tRNA + L-cysteinyl-[protein] + A + AMP + diphosphate + H(+). Functionally, catalyzes the 2-thiolation of uridine at the wobble position (U34) of tRNA, leading to the formation of s(2)U34. This Ralstonia pickettii (strain 12J) protein is tRNA-specific 2-thiouridylase MnmA.